A 98-amino-acid polypeptide reads, in one-letter code: MSMVYINIFLAFIMSLMGLLMYRSHLMSSLLCLEGMMLSLFIMMAVAILNNHLTLASMTPIILLVFAACEAALGLSLLVMVSNTYGTDYVQNLNLLQC.

A run of 3 helical transmembrane segments spans residues 1–21 (MSMV…GLLM), 29–49 (SLLC…VAIL), and 61–81 (IILL…LVMV).

This sequence belongs to the complex I subunit 4L family. Core subunit of respiratory chain NADH dehydrogenase (Complex I) which is composed of 45 different subunits.

The protein localises to the mitochondrion inner membrane. It catalyses the reaction a ubiquinone + NADH + 5 H(+)(in) = a ubiquinol + NAD(+) + 4 H(+)(out). Functionally, core subunit of the mitochondrial membrane respiratory chain NADH dehydrogenase (Complex I) which catalyzes electron transfer from NADH through the respiratory chain, using ubiquinone as an electron acceptor. Part of the enzyme membrane arm which is embedded in the lipid bilayer and involved in proton translocation. The sequence is that of NADH-ubiquinone oxidoreductase chain 4L (MT-ND4L) from Felis catus (Cat).